Here is a 503-residue protein sequence, read N- to C-terminus: ESX-5 secretion system protein EccD5 (503 aa).

The next 10 helical transmembrane spans lie at 137–157 (VVAV…ASGV), 169–189 (LTTI…MMLL), 200–220 (VADI…ASAP), 224–244 (VGSP…ALAL), 250–270 (RLAI…ASLS), 272–292 (MVAA…CVVM), 359–379 (FLSG…TSLC), 414–434 (ITLA…YALV), 443–463 (IVAS…AVVP), and 480–500 (YLCL…YAAI).

This sequence belongs to the EccD/Snm4 family. As to quaternary structure, part of the ESX-5 / type VII secretion system (T7SS), which is composed of cytosolic and membrane components. The ESX-5 membrane complex is composed of EccB5, EccC5, EccD5 and EccE5.

The protein localises to the cell inner membrane. Its function is as follows. Part of the ESX-5 specialized secretion system, which is responsible for the secretion of EsxN and a number of PE_PGRS and PPE proteins. This component is essential for ESX-5 complex stability and secretion. This Mycobacterium marinum (strain ATCC BAA-535 / M) protein is ESX-5 secretion system protein EccD5.